A 283-amino-acid polypeptide reads, in one-letter code: Acetylglutamate kinase (283 aa).

Substrate-binding positions include 64 to 65 (GG), R86, and N178.

The protein belongs to the acetylglutamate kinase family. ArgB subfamily.

It is found in the cytoplasm. The catalysed reaction is N-acetyl-L-glutamate + ATP = N-acetyl-L-glutamyl 5-phosphate + ADP. It functions in the pathway amino-acid biosynthesis; L-arginine biosynthesis; N(2)-acetyl-L-ornithine from L-glutamate: step 2/4. Its function is as follows. Catalyzes the ATP-dependent phosphorylation of N-acetyl-L-glutamate. The sequence is that of Acetylglutamate kinase from Lactococcus lactis subsp. cremoris (strain MG1363).